Reading from the N-terminus, the 1358-residue chain is Phosphoinositide 3-kinase regulatory subunit 4 (1358 aa).

The N-myristoyl glycine moiety is linked to residue Gly2. One can recognise a Protein kinase domain in the interval 26-324 (FEYDKSLGST…AFPEIFYTFL (299 aa)). ATP-binding positions include 32–40 (LGSTRFFKV) and Lys53. Asp148 functions as the Proton acceptor in the catalytic mechanism. 4 HEAT repeats span residues 413 to 450 (ILLD…LVQE), 458 to 495 (IYPE…TALR), 572 to 610 (KAND…YVGW), and 612 to 648 (SSSI…LGLL). Residues Ser808, Ser813, Ser853, and Ser865 each carry the phosphoserine modification. WD repeat units follow at residues 991 to 1030 (EHKS…GKTT), 1040 to 1079 (RIGG…LPKS), 1093 to 1134 (KEDG…NAWT), 1139 to 1178 (LKSG…PISS), 1182 to 1223 (PSRA…RRLT), and 1237 to 1278 (PSPH…RSYV). Residues 1307–1326 (KQKVGPSDDTPRRGPESLPV) form a disordered region. A compositionally biased stretch (basic and acidic residues) spans 1315 to 1326 (DTPRRGPESLPV). The residue at position 1316 (Thr1316) is a Phosphothreonine. Residues 1327-1358 (GHHDIITDIATFQTTQGFIVTASRDGIVKVWK) form a WD 7 repeat.

Belongs to the protein kinase superfamily. Ser/Thr protein kinase family. As to quaternary structure, component of the PI3K (PI3KC3/PI3K-III/class III phosphatidylinositol 3-kinase) complex the core of which is composed of the catalytic subunit PIK3C3, the regulatory subunit PIK3R4 and BECN1 associating with additional regulatory/auxiliary subunits to form alternative complex forms. Alternative complex forms containing a fourth regulatory subunit in a mutually exclusive manner are PI3K complex I (PI3KC3-C1) containing ATG14, and PI3K complex II (PI3KC3-C2) containing UVRAG. PI3KC3-C1 displays a V-shaped architecture with PIK3R4 serving as a bridge between PIK3C3 and the ATG14:BECN1 subcomplex. Both, PI3KC3-C1 and PI3KC3-C2, can associate with further regulatory subunits, such as RUBCN, SH3GLB1/Bif-1, AMBRA1 and NRBF2. PI3KC3-C1 probably associates with PIK3CB. Interacts with RAB7A in the presence of PIK3C3/VPS34. Interacts with NRBF2. Interacts with ARMC3. Requires Mn(2+) as cofactor. Post-translationally, myristoylated. In terms of processing, probably autophosphorylated.

It localises to the late endosome. Its subcellular location is the cytoplasmic vesicle. It is found in the autophagosome. The protein localises to the membrane. The catalysed reaction is L-seryl-[protein] + ATP = O-phospho-L-seryl-[protein] + ADP + H(+). The enzyme catalyses L-threonyl-[protein] + ATP = O-phospho-L-threonyl-[protein] + ADP + H(+). Functionally, regulatory subunit of the PI3K complex that mediates formation of phosphatidylinositol 3-phosphate; different complex forms are believed to play a role in multiple membrane trafficking pathways: PI3KC3-C1 is involved in initiation of autophagosomes and PI3KC3-C2 in maturation of autophagosomes and endocytosis. Involved in regulation of degradative endocytic trafficking and cytokinesis, probably in the context of PI3KC3-C2. This chain is Phosphoinositide 3-kinase regulatory subunit 4 (Pik3r4), found in Mus musculus (Mouse).